Reading from the N-terminus, the 365-residue chain is Protein RecA (365 aa).

77–84 (GPESSGKT) contacts ATP.

It belongs to the RecA family.

It is found in the cytoplasm. Functionally, can catalyze the hydrolysis of ATP in the presence of single-stranded DNA, the ATP-dependent uptake of single-stranded DNA by duplex DNA, and the ATP-dependent hybridization of homologous single-stranded DNAs. It interacts with LexA causing its activation and leading to its autocatalytic cleavage. This is Protein RecA from Mesorhizobium japonicum (strain LMG 29417 / CECT 9101 / MAFF 303099) (Mesorhizobium loti (strain MAFF 303099)).